Consider the following 89-residue polypeptide: Large ribosomal subunit protein eL34 (89 aa).

Positions 41–69 (RPLNGVPRGRPSELRKLPKTAKRPERPYP) are disordered. Positions 50–66 (RPSELRKLPKTAKRPER) are enriched in basic and acidic residues.

It belongs to the eukaryotic ribosomal protein eL34 family.

This chain is Large ribosomal subunit protein eL34, found in Thermococcus gammatolerans (strain DSM 15229 / JCM 11827 / EJ3).